A 429-amino-acid chain; its full sequence is tRNA(Ile2) 2-agmatinylcytidine synthetase TiaS (429 aa).

Positions 271–343 (VRGKVIKKYW…LTLNLEKFYP (73 aa)) form a DNA-binding region, OB.

Belongs to the TiaS family.

It localises to the cytoplasm. The catalysed reaction is cytidine(34) in tRNA(Ile2) + agmatine + ATP + H2O = 2-agmatinylcytidine(34) in tRNA(Ile2) + AMP + 2 phosphate + 2 H(+). ATP-dependent agmatine transferase that catalyzes the formation of 2-agmatinylcytidine (agm2C) at the wobble position (C34) of tRNA(Ile2), converting the codon specificity from AUG to AUA. The protein is tRNA(Ile2) 2-agmatinylcytidine synthetase TiaS of Thermococcus sibiricus (strain DSM 12597 / MM 739).